Reading from the N-terminus, the 128-residue chain is Ribosome-binding factor A (128 aa).

This sequence belongs to the RbfA family. Monomer. Binds 30S ribosomal subunits, but not 50S ribosomal subunits or 70S ribosomes.

It localises to the cytoplasm. Functionally, one of several proteins that assist in the late maturation steps of the functional core of the 30S ribosomal subunit. Associates with free 30S ribosomal subunits (but not with 30S subunits that are part of 70S ribosomes or polysomes). Required for efficient processing of 16S rRNA. May interact with the 5'-terminal helix region of 16S rRNA. The chain is Ribosome-binding factor A from Herminiimonas arsenicoxydans.